A 216-amino-acid chain; its full sequence is Enolase-phosphatase E1 (216 aa).

Residues Asp-8 and Glu-10 each contribute to the Mg(2+) site. Residues 115-116 (SS) and Lys-149 each bind substrate. Asp-172 provides a ligand contact to Mg(2+).

Belongs to the HAD-like hydrolase superfamily. MasA/MtnC family. As to quaternary structure, monomer. Requires Mg(2+) as cofactor.

The protein resides in the cytoplasm. It is found in the nucleus. The catalysed reaction is 5-methylsulfanyl-2,3-dioxopentyl phosphate + H2O = 1,2-dihydroxy-5-(methylsulfanyl)pent-1-en-3-one + phosphate. The protein operates within amino-acid biosynthesis; L-methionine biosynthesis via salvage pathway; L-methionine from S-methyl-5-thio-alpha-D-ribose 1-phosphate: step 3/6. It functions in the pathway amino-acid biosynthesis; L-methionine biosynthesis via salvage pathway; L-methionine from S-methyl-5-thio-alpha-D-ribose 1-phosphate: step 4/6. Functionally, bifunctional enzyme that catalyzes the enolization of 2,3-diketo-5-methylthiopentyl-1-phosphate (DK-MTP-1-P) into the intermediate 2-hydroxy-3-keto-5-methylthiopentenyl-1-phosphate (HK-MTPenyl-1-P), which is then dephosphorylated to form the acireductone 1,2-dihydroxy-3-keto-5-methylthiopentene (DHK-MTPene). This is Enolase-phosphatase E1 (utr4) from Schizosaccharomyces pombe (strain 972 / ATCC 24843) (Fission yeast).